The primary structure comprises 203 residues: Protein-L-isoaspartate O-methyltransferase (203 aa).

Ser-50 is an active-site residue.

Belongs to the methyltransferase superfamily. L-isoaspartyl/D-aspartyl protein methyltransferase family.

The protein localises to the cytoplasm. The enzyme catalyses [protein]-L-isoaspartate + S-adenosyl-L-methionine = [protein]-L-isoaspartate alpha-methyl ester + S-adenosyl-L-homocysteine. Catalyzes the methyl esterification of L-isoaspartyl residues in peptides and proteins that result from spontaneous decomposition of normal L-aspartyl and L-asparaginyl residues. It plays a role in the repair and/or degradation of damaged proteins. The polypeptide is Protein-L-isoaspartate O-methyltransferase (Methanococcoides burtonii (strain DSM 6242 / NBRC 107633 / OCM 468 / ACE-M)).